The chain runs to 306 residues: Aspartate carbamoyltransferase catalytic subunit (306 aa).

Carbamoyl phosphate is bound by residues arginine 55 and threonine 56. Lysine 85 is an L-aspartate binding site. Arginine 106, histidine 133, and glutamine 136 together coordinate carbamoyl phosphate. L-aspartate is bound by residues arginine 166 and arginine 228. Residues leucine 264 and proline 265 each coordinate carbamoyl phosphate.

It belongs to the aspartate/ornithine carbamoyltransferase superfamily. ATCase family. In terms of assembly, heterododecamer (2C3:3R2) of six catalytic PyrB chains organized as two trimers (C3), and six regulatory PyrI chains organized as three dimers (R2).

It carries out the reaction carbamoyl phosphate + L-aspartate = N-carbamoyl-L-aspartate + phosphate + H(+). It functions in the pathway pyrimidine metabolism; UMP biosynthesis via de novo pathway; (S)-dihydroorotate from bicarbonate: step 2/3. Catalyzes the condensation of carbamoyl phosphate and aspartate to form carbamoyl aspartate and inorganic phosphate, the committed step in the de novo pyrimidine nucleotide biosynthesis pathway. This is Aspartate carbamoyltransferase catalytic subunit from Serratia marcescens.